Consider the following 630-residue polypeptide: Probable potassium transport system protein Kup 2 (630 aa).

Helical transmembrane passes span 17 to 37 (FWAL…TSPL), 56 to 76 (VIVL…VTAK), 108 to 128 (VFLM…SMIT), 145 to 165 (PALE…LFAF), 176 to 196 (AFGP…LIHI), 214 to 234 (FMLS…LAVT), 255 to 275 (WLFF…ALVL), 293 to 313 (FLVP…QAVI), 345 to 365 (IYLP…VLLF), 375 to 395 (YGIA…VVIW), 402 to 422 (PAAA…FFSA), and 427 to 447 (LLEG…LIWV).

It belongs to the HAK/KUP transporter (TC 2.A.72) family.

It localises to the cell inner membrane. The enzyme catalyses K(+)(in) + H(+)(in) = K(+)(out) + H(+)(out). In terms of biological role, transport of potassium into the cell. Likely operates as a K(+):H(+) symporter. The sequence is that of Probable potassium transport system protein Kup 2 from Rhodopseudomonas palustris (strain BisB18).